Consider the following 98-residue polypeptide: Small ribosomal subunit protein bS20 (98 aa).

A compositionally biased stretch (basic residues) spans 1–15 (MAPKKTTKKGGPKKR). The segment at 1–21 (MAPKKTTKKGGPKKRPSAEKR) is disordered.

It belongs to the bacterial ribosomal protein bS20 family.

In terms of biological role, binds directly to 16S ribosomal RNA. The protein is Small ribosomal subunit protein bS20 of Chlamydia abortus (strain DSM 27085 / S26/3) (Chlamydophila abortus).